A 126-amino-acid chain; its full sequence is Large ribosomal subunit protein bL19 (126 aa).

It belongs to the bacterial ribosomal protein bL19 family.

Its function is as follows. This protein is located at the 30S-50S ribosomal subunit interface and may play a role in the structure and function of the aminoacyl-tRNA binding site. The protein is Large ribosomal subunit protein bL19 of Dechloromonas aromatica (strain RCB).